Reading from the N-terminus, the 499-residue chain is GTPase Der (499 aa).

The EngA-type G 1 domain maps to 3 to 166; that stretch reads PVIALVGRPN…QALGIFPKDN (164 aa). Residues 9 to 16, 56 to 60, and 118 to 121 each bind GTP; these read GRPNVGKS, DTGGI, and NKVD. The segment at 166 to 199 is disordered; the sequence is NADENAEGEEGGELAEGEEVVAEGQEPKRIPGPS. Residues 168-186 are compositionally biased toward acidic residues; sequence DENAEGEEGGELAEGEEVV. Residues 190–199 show a composition bias toward basic and acidic residues; sequence QEPKRIPGPS. In terms of domain architecture, EngA-type G 2 spans 204-377; it reads IKIAIIGRPN…SVQAAFKSAI (174 aa). GTP contacts are provided by residues 210–217, 257–261, and 322–325; these read GRPNVGKS, DTAGV, and NKWD. Positions 378–462 constitute a KH-like domain; that stretch reads TRWPTSRLTQ…PIRIEYKGGD (85 aa). Basic and acidic residues predominate over residues 459-472; it reads KGGDNPYEGKKNTL. Residues 459-499 are disordered; the sequence is KGGDNPYEGKKNTLTDRQVNKKRRLMSHHKKAEKKRRDKKR. Over residues 478–499 the composition is skewed to basic residues; the sequence is NKKRRLMSHHKKAEKKRRDKKR.

It belongs to the TRAFAC class TrmE-Era-EngA-EngB-Septin-like GTPase superfamily. EngA (Der) GTPase family. Associates with the 50S ribosomal subunit.

In terms of biological role, GTPase that plays an essential role in the late steps of ribosome biogenesis. In Stutzerimonas stutzeri (strain A1501) (Pseudomonas stutzeri), this protein is GTPase Der.